Reading from the N-terminus, the 623-residue chain is DEAD-box ATP-dependent RNA helicase 52C (623 aa).

Residues 1 to 120 (MATPSRTSWA…DGDAAAGAGD (120 aa)) are disordered. Positions 10 to 29 (ADVADADPAPAPAPAANGPA) are enriched in low complexity. Residues 54-69 (APPPSSSSSSAPPPRA) are compositionally biased toward pro residues. Residues 70–83 (APGLLAPRPAAAGM) show a composition bias toward low complexity. Over residues 84 to 97 (GRMGGGGGGGGFGG) the composition is skewed to gly residues. A Q motif motif is present at residues 155–183 (GTFAEIDLGQALNDNIRRCKYVRPTPVQR). Residues 186–372 (IPISLAGRDL…SDFLENYIFL (187 aa)) form the Helicase ATP-binding domain. 199 to 206 (AQTGSGKT) is a binding site for ATP. The short motif at 316–319 (DEAD) is the DEAD box element. The 152-residue stretch at 399-550 (HLMDLLHAQR…EVPAWLSRYA (152 aa)) folds into the Helicase C-terminal domain. The segment at 553-595 (PSYGGGGGRNRRSGGGSRFGGRDFRRDSSSGRGGGDYYGGGSS) is disordered. The span at 555–571 (YGGGGGRNRRSGGGSRF) shows a compositional bias: gly residues. Positions 572–581 (GGRDFRRDSS) are enriched in basic and acidic residues. The span at 583-595 (GRGGGDYYGGGSS) shows a compositional bias: gly residues.

The protein belongs to the DEAD box helicase family. DDX3/DED1 subfamily.

The catalysed reaction is ATP + H2O = ADP + phosphate + H(+). The chain is DEAD-box ATP-dependent RNA helicase 52C from Oryza sativa subsp. japonica (Rice).